The following is a 276-amino-acid chain: Protein G1 (276 aa).

Disordered stretches follow at residues 1–30 and 178–213; these read MSSS…SQKR and SYHK…ATAP. Basic and acidic residues predominate over residues 21–30; sequence RPSRYESQKR. Positions 24-183 constitute an ALOG domain; it reads RYESQKRRDW…ARGISYHKKK (160 aa). Positions 178 to 187 are enriched in basic residues; the sequence is SYHKKKKRRG. Positions 181–185 match the Nuclear localization signal motif; the sequence is KKKKR. Residues 189–202 show a composition bias toward gly residues; that stretch reads NMNGARGGGGGGAR. Residues 203–213 show a composition bias toward low complexity; sequence AGVNDGDATAP.

The protein belongs to the plant homeotic and developmental regulators ALOG protein family. Expressed at the empty glumes of immature spikelets, which are lemmas of the sterile florets located at the lateral side of the spikelet, throughout their development.

It localises to the nucleus. In terms of biological role, probable transcription regulator that acts as a developmental regulator by promoting cell growth in response to light. Transcription regulator that restrains empty glumes growth, lemmas of the sterile florets located at the lateral side of the rice spikelet, to maintain their small size, probably by repressing lemma identity via transcription regulation. This chain is Protein G1 (G1), found in Oryza sativa subsp. japonica (Rice).